A 185-amino-acid polypeptide reads, in one-letter code: TATA-box-binding protein (185 aa).

2 tandem repeats follow at residues 3–78 (IQNI…REDL) and 94–176 (IQNI…AEKI).

The protein belongs to the TBP family.

Functionally, general factor that plays a role in the activation of archaeal genes transcribed by RNA polymerase. Binds specifically to the TATA box promoter element which lies close to the position of transcription initiation. This chain is TATA-box-binding protein, found in Methanopyrus kandleri (strain AV19 / DSM 6324 / JCM 9639 / NBRC 100938).